The chain runs to 435 residues: Serine--tRNA ligase (435 aa).

242 to 244 contributes to the L-serine binding site; sequence TAE. 273-275 serves as a coordination point for ATP; the sequence is RSE. L-serine is bound at residue glutamate 296. 360–363 is a binding site for ATP; the sequence is EISS. Serine 396 serves as a coordination point for L-serine.

Belongs to the class-II aminoacyl-tRNA synthetase family. Type-1 seryl-tRNA synthetase subfamily. As to quaternary structure, homodimer. The tRNA molecule binds across the dimer.

The protein localises to the cytoplasm. The enzyme catalyses tRNA(Ser) + L-serine + ATP = L-seryl-tRNA(Ser) + AMP + diphosphate + H(+). The catalysed reaction is tRNA(Sec) + L-serine + ATP = L-seryl-tRNA(Sec) + AMP + diphosphate + H(+). It participates in aminoacyl-tRNA biosynthesis; selenocysteinyl-tRNA(Sec) biosynthesis; L-seryl-tRNA(Sec) from L-serine and tRNA(Sec): step 1/1. Functionally, catalyzes the attachment of serine to tRNA(Ser). Is also able to aminoacylate tRNA(Sec) with serine, to form the misacylated tRNA L-seryl-tRNA(Sec), which will be further converted into selenocysteinyl-tRNA(Sec). This is Serine--tRNA ligase from Vibrio parahaemolyticus serotype O3:K6 (strain RIMD 2210633).